We begin with the raw amino-acid sequence, 600 residues long: MCGIVGFIGEQDAKEILLKGLEKLEYRGYDSAGIAVQAENGVVVYKEKGRIAKLREIVDENVATSVGIGHTRWATHGVPSKVNAHPHQSTSKRFTLVHNGVIENYELVKKEYLQDVTFVSETDTEVIVQLMEQQVSTGLSVEEAFRNTLSLLHGSYAIGLLDAENPNMIYVAKNKSPLLVGVGDNFNVVASDAMAMLQVTDQFIELMDKEIVIVTKESITIKNLQGETIERAPFTAELDASDIEKGTYPHFMLKEIDEQPLVIRNIIQKYQDENGEIELDQDIRNAILDSDRIYIIACGTSYHAGLVGKQFIEKFAKMPVEVHVASEFSYNMPLLTERPFFIYISQSGETADSRAVLVQTNEMGHKALTITNVPGSTLSREADYTLPLYAGPEIAVASTKAYTAQLAVLSILAADIAKAKGEVLGFDLTHELGLVANAMVQLCDQKEEMDALAKQFLATTRNCFFIGRSVDFYVGLEGALKLKEISYIQAEGFAGGELKHGTIALIENGTPVIALATQEHVNLGIRGNVKEVVARGANPCIISMKGLEMEGDSFVLPAVHEALAPLVAVIPLQLISYYAALHRECDVDKPRNLAKSVTVE.

Cysteine 2 acts as the Nucleophile; for GATase activity in catalysis. The Glutamine amidotransferase type-2 domain maps to 2–217 (CGIVGFIGEQ…DKEIVIVTKE (216 aa)). 2 consecutive SIS domains span residues 283–422 (IRNA…AKGE) and 452–590 (LAKQ…VDKP). Lysine 595 acts as the For Fru-6P isomerization activity in catalysis.

Homodimer.

It localises to the cytoplasm. It catalyses the reaction D-fructose 6-phosphate + L-glutamine = D-glucosamine 6-phosphate + L-glutamate. Its function is as follows. Catalyzes the first step in hexosamine metabolism, converting fructose-6P into glucosamine-6P using glutamine as a nitrogen source. The sequence is that of Glutamine--fructose-6-phosphate aminotransferase [isomerizing] from Bacillus cereus (strain ATCC 10987 / NRS 248).